Consider the following 154-residue polypeptide: uncharacterized protein (154 aa).

In terms of domain architecture, HTH marR-type spans 1-143; the sequence is MTESERALLT…LRKLAGSLTK (143 aa). Positions 57–80 form a DNA-binding region, H-T-H motif; sequence LSKLAMSLDLKPASVTRMTDILYK.

This is an uncharacterized protein from Bacillus subtilis (strain 168).